A 444-amino-acid chain; its full sequence is Trigger factor (444 aa).

In terms of domain architecture, PPIase FKBP-type spans 165–250; sequence GDFAKFDFEG…LHEIQELKIP (86 aa).

Belongs to the FKBP-type PPIase family. Tig subfamily.

Its subcellular location is the cytoplasm. The enzyme catalyses [protein]-peptidylproline (omega=180) = [protein]-peptidylproline (omega=0). In terms of biological role, involved in protein export. Acts as a chaperone by maintaining the newly synthesized protein in an open conformation. Functions as a peptidyl-prolyl cis-trans isomerase. The protein is Trigger factor (tig) of Campylobacter jejuni subsp. jejuni serotype O:2 (strain ATCC 700819 / NCTC 11168).